Consider the following 380-residue polypeptide: WAT1-related protein At2g37460 (380 aa).

10 consecutive transmembrane segments (helical) span residues 16 to 36 (FISMVVLQVGLAGMDILSKAV), 45 to 65 (VLVVYRHAVATIVMAPFAFYF), 71 to 91 (PKMTLMIFFKISLLGLLEPVI), 107 to 127 (FATAMYNVLPAITFVLAYIFG), 142 to 162 (VVGTLATVGGAMIMTLVKGPV), 187 to 207 (GAVLVTIGCFSYACFMILQAI), 216 to 236 (LSLTAWICLMGTIEGTAVALV), 254 to 274 (LTATYSGIVCSALAYYVGGVV), 282 to 302 (FVTAFSPLCMIIVAIMSTIIF), and 306 to 326 (MYLGRVLGAVVICAGLYLVIW). The region spanning 27 to 134 (AGMDILSKAV…IFGLERVKLR (108 aa)) is the EamA 1 domain. The region spanning 196–325 (FSYACFMILQ…VICAGLYLVI (130 aa)) is the EamA 2 domain.

Belongs to the drug/metabolite transporter (DMT) superfamily. Plant drug/metabolite exporter (P-DME) (TC 2.A.7.4) family.

The protein localises to the membrane. The sequence is that of WAT1-related protein At2g37460 from Arabidopsis thaliana (Mouse-ear cress).